The sequence spans 574 residues: Urease subunit alpha (574 aa).

The Urease domain maps to 131 to 574 (GAIDSHIHFI…LPMAQRYLLI (444 aa)). Histidine 136, histidine 138, and lysine 219 together coordinate Ni(2+). Position 219 is an N6-carboxylysine (lysine 219). Histidine 221 serves as a coordination point for substrate. Ni(2+) contacts are provided by histidine 248 and histidine 274. The Proton donor role is filled by histidine 322. Aspartate 362 contacts Ni(2+).

Belongs to the metallo-dependent hydrolases superfamily. Urease alpha subunit family. In terms of assembly, heterotrimer of UreA (gamma), UreB (beta) and UreC (alpha) subunits. Three heterotrimers associate to form the active enzyme. It depends on Ni cation as a cofactor. Post-translationally, carboxylation allows a single lysine to coordinate two nickel ions.

Its subcellular location is the cytoplasm. It carries out the reaction urea + 2 H2O + H(+) = hydrogencarbonate + 2 NH4(+). It participates in nitrogen metabolism; urea degradation; CO(2) and NH(3) from urea (urease route): step 1/1. This is Urease subunit alpha from Prochlorococcus marinus (strain MIT 9303).